The primary structure comprises 420 residues: Glucose-1-phosphate adenylyltransferase (420 aa).

Residues Y107, G173, 188–189, and S206 contribute to the alpha-D-glucose 1-phosphate site; that span reads EK.

The protein belongs to the bacterial/plant glucose-1-phosphate adenylyltransferase family. Homotetramer.

The catalysed reaction is alpha-D-glucose 1-phosphate + ATP + H(+) = ADP-alpha-D-glucose + diphosphate. It functions in the pathway glycan biosynthesis; glycogen biosynthesis. Its function is as follows. Involved in the biosynthesis of ADP-glucose, a building block required for the elongation reactions to produce glycogen. Catalyzes the reaction between ATP and alpha-D-glucose 1-phosphate (G1P) to produce pyrophosphate and ADP-Glc. The protein is Glucose-1-phosphate adenylyltransferase of Shewanella sp. (strain MR-4).